The primary structure comprises 44 residues: MKRTYQASKVRRARTHGFLVRMKTRGGRAVINARRAKGRKRLAV.

Belongs to the bacterial ribosomal protein bL34 family.

The polypeptide is Large ribosomal subunit protein bL34 (Variovorax paradoxus (strain S110)).